A 261-amino-acid polypeptide reads, in one-letter code: Glucose 1-dehydrogenase (261 aa).

Val11–Val35 serves as a coordination point for NADP(+). Ser145 is a substrate binding site. Tyr158 acts as the Proton acceptor in catalysis.

This sequence belongs to the short-chain dehydrogenases/reductases (SDR) family. Homotetramer.

It carries out the reaction D-glucose + NAD(+) = D-glucono-1,5-lactone + NADH + H(+). It catalyses the reaction D-glucose + NADP(+) = D-glucono-1,5-lactone + NADPH + H(+). The protein is Glucose 1-dehydrogenase of Priestia megaterium (Bacillus megaterium).